Here is a 107-residue protein sequence, read N- to C-terminus: Flagellar transcriptional regulator FlhD (107 aa).

It belongs to the FlhD family. In terms of assembly, homodimer; disulfide-linked. Forms a heterohexamer composed of two FlhC and four FlhD subunits. Each FlhC binds a FlhD dimer, forming a heterotrimer, and a hexamer assembles by dimerization of two heterotrimers.

It is found in the cytoplasm. In terms of biological role, functions in complex with FlhC as a master transcriptional regulator that regulates transcription of several flagellar and non-flagellar operons by binding to their promoter region. Activates expression of class 2 flagellar genes, including fliA, which is a flagellum-specific sigma factor that turns on the class 3 genes. Also regulates genes whose products function in a variety of physiological pathways. The protein is Flagellar transcriptional regulator FlhD of Bordetella avium (strain 197N).